Consider the following 323-residue polypeptide: Down-regulator of invasive growth 2 (323 aa).

The span at 1–10 shows a compositional bias: acidic residues; it reads MNKEEQEDPQ. The interval 1–26 is disordered; sequence MNKEEQEDPQQEQISTVQENDPRNLQ. The span at 11–26 shows a compositional bias: polar residues; the sequence is QEQISTVQENDPRNLQ. Ser-34 bears the Phosphoserine mark. The disordered stretch occupies residues 67-87; it reads LSQKEEDHSGKPPTITTSPAE. Residues Ser-225, Ser-266, and Ser-270 each carry the phosphoserine modification.

In terms of assembly, forms a complex with DIG1, STE12 and either FUS3 or KSS1. The interaction of FUS3 with STE12 depends on the presence of both DIG1 and DIG2. STE12 is lost from FUS3/DIG1/DIG2 complex after pheromone treatment. DIG1 and DIG2 have also been reported to interact with CLN1 and CLN2. In terms of processing, phosphorylated by FUS3 and KSS1, in a pheromone-stimulated manner.

It localises to the nucleus. In terms of biological role, DIG2 and DIG1 are negative regulators of the filamentation and pheromone induced mating program. DIG1 and DIG2 inhibit the transcriptional activity of STE12 by direct protein-protein interaction. DIG2 binds to the DNA binding domain (DBD) of STE12 and thus inhibits transcription when overexpressed. The sequence is that of Down-regulator of invasive growth 2 (DIG2) from Saccharomyces cerevisiae (strain ATCC 204508 / S288c) (Baker's yeast).